A 656-amino-acid chain; its full sequence is Histidine decarboxylase (656 aa).

Residues Y84 and H197 each coordinate substrate. K308 carries the N6-(pyridoxal phosphate)lysine modification. 2 positions are modified to phosphoserine; by PKA: S343 and S362. A disordered region spans residues 481-502; the sequence is HCTSQPSPRAKNLIPPPVTRDS.

This sequence belongs to the group II decarboxylase family. As to quaternary structure, homodimer. Requires pyridoxal 5'-phosphate as cofactor. May be post-translationally processed. As to expression, brain, glandular regions of the stomach, mast cells and fetal liver.

It carries out the reaction L-histidine + H(+) = histamine + CO2. It functions in the pathway amine and polyamine biosynthesis; histamine biosynthesis; histamine from L-histidine: step 1/1. Its activity is regulated as follows. Phosphorylation of brain HDC by cAMP-dependent protein kinase leads to enzyme inactivation. Catalyzes the biosynthesis of histamine from histidine. This chain is Histidine decarboxylase (Hdc), found in Rattus norvegicus (Rat).